The primary structure comprises 74 residues: MGKVRINVVKRTARKLLQMYPDLFTRDFEHNKKVVSQLIEVNSKKLRNQIAGYITHLKKVEERRQKVELREEYL.

The protein belongs to the eukaryotic ribosomal protein eS17 family.

The chain is Small ribosomal subunit protein eS17 from Ignicoccus hospitalis (strain KIN4/I / DSM 18386 / JCM 14125).